Here is a 173-residue protein sequence, read N- to C-terminus: Streptothricin acetyltransferase A (173 aa).

Residues 21 to 173 enclose the N-acetyltransferase domain; the sequence is VVFGRMIPAF…EIAIFWYYKF (153 aa).

This sequence belongs to the acetyltransferase family. GNAT subfamily. Homodimer.

The catalysed reaction is streptothricin D + acetyl-CoA = N(beta)-acetylstreptothricin D + CoA + H(+). It catalyses the reaction streptothricin F + acetyl-CoA = N(beta)-acetylstreptothricin F + CoA + H(+). Its function is as follows. Involved in resistance to streptothricin, a broad-spectrum antibiotic produced by streptomycetes. Detoxifies streptothricin via acetylation of the beta amino group of the first beta-lysyl moiety of streptothricin. The chain is Streptothricin acetyltransferase A from Bacillus subtilis (strain 168).